Reading from the N-terminus, the 244-residue chain is ATP synthase subunit a (244 aa).

The next 6 membrane-spanning stretches (helical) occupy residues 25–45, 85–105, 115–135, 144–164, 193–213, and 216–236; these read ISFT…LLIF, YFAF…FGMI, IIVT…IGFM, LFVP…IEII, GFVI…SVAL, and LEIL…CIYL.

Belongs to the ATPase A chain family. In terms of assembly, F-type ATPases have 2 components, CF(1) - the catalytic core - and CF(0) - the membrane proton channel. CF(1) has five subunits: alpha(3), beta(3), gamma(1), delta(1), epsilon(1). CF(0) has three main subunits: a(1), b(2) and c(9-12). The alpha and beta chains form an alternating ring which encloses part of the gamma chain. CF(1) is attached to CF(0) by a central stalk formed by the gamma and epsilon chains, while a peripheral stalk is formed by the delta and b chains.

The protein resides in the cell inner membrane. Functionally, key component of the proton channel; it plays a direct role in the translocation of protons across the membrane. The protein is ATP synthase subunit a of Pelagibacter ubique (strain HTCC1062).